Consider the following 173-residue polypeptide: Urease accessory protein UreE (173 aa).

The interval proline 136–glycine 173 is disordered. Residues glutamine 146 to glycine 173 show a composition bias toward basic and acidic residues.

This sequence belongs to the UreE family.

It localises to the cytoplasm. In terms of biological role, involved in urease metallocenter assembly. Binds nickel. Probably functions as a nickel donor during metallocenter assembly. This Beijerinckia indica subsp. indica (strain ATCC 9039 / DSM 1715 / NCIMB 8712) protein is Urease accessory protein UreE.